Reading from the N-terminus, the 453-residue chain is Tubulin alpha chain (453 aa).

A GTP-binding site is contributed by Q11. Residue K40 is modified to N6-acetyllysine. E71, G144, T145, T179, N206, and N228 together coordinate GTP. Position 71 (E71) interacts with Mg(2+). E254 is an active-site residue.

It belongs to the tubulin family. In terms of assembly, dimer of alpha and beta chains. A typical microtubule is a hollow water-filled tube with an outer diameter of 25 nm and an inner diameter of 15 nM. Alpha-beta heterodimers associate head-to-tail to form protofilaments running lengthwise along the microtubule wall with the beta-tubulin subunit facing the microtubule plus end conferring a structural polarity. Microtubules usually have 13 protofilaments but different protofilament numbers can be found in some organisms and specialized cells. Requires Mg(2+) as cofactor. Undergoes a tyrosination/detyrosination cycle, the cyclic removal and re-addition of a C-terminal tyrosine residue by the enzymes tubulin tyrosine carboxypeptidase (TTCP) and tubulin tyrosine ligase (TTL), respectively. In terms of processing, acetylation of alpha chains at Lys-40 stabilizes microtubules and affects affinity and processivity of microtubule motors. This modification has a role in multiple cellular functions, ranging from cell motility, cell cycle progression or cell differentiation to intracellular trafficking and signaling.

It is found in the cytoplasm. It localises to the cytoskeleton. The enzyme catalyses GTP + H2O = GDP + phosphate + H(+). In terms of biological role, tubulin is the major constituent of microtubules, a cylinder consisting of laterally associated linear protofilaments composed of alpha- and beta-tubulin heterodimers. Microtubules grow by the addition of GTP-tubulin dimers to the microtubule end, where a stabilizing cap forms. Below the cap, tubulin dimers are in GDP-bound state, owing to GTPase activity of alpha-tubulin. The chain is Tubulin alpha chain from Plasmodium falciparum (isolate K1 / Thailand).